Here is a 335-residue protein sequence, read N- to C-terminus: Beta-ketoacyl-[acyl-carrier-protein] synthase III (335 aa).

Catalysis depends on residues cysteine 120 and histidine 261. The segment at 262-266 (QANER) is ACP-binding. Residue asparagine 291 is part of the active site.

Belongs to the thiolase-like superfamily. FabH family. Homodimer.

It is found in the cytoplasm. The enzyme catalyses malonyl-[ACP] + acetyl-CoA + H(+) = 3-oxobutanoyl-[ACP] + CO2 + CoA. Its pathway is lipid metabolism; fatty acid biosynthesis. Catalyzes the condensation reaction of fatty acid synthesis by the addition to an acyl acceptor of two carbons from malonyl-ACP. Catalyzes the first condensation reaction which initiates fatty acid synthesis and may therefore play a role in governing the total rate of fatty acid production. Possesses both acetoacetyl-ACP synthase and acetyl transacylase activities. Its substrate specificity determines the biosynthesis of branched-chain and/or straight-chain of fatty acids. The sequence is that of Beta-ketoacyl-[acyl-carrier-protein] synthase III from Chlamydia pneumoniae (Chlamydophila pneumoniae).